Here is a 63-residue protein sequence, read N- to C-terminus: Small ribosomal subunit protein eS30 (63 aa).

The disordered stretch occupies residues 1-33 (MGKVHGSLARAGKVKSQTPKVEKQEKPKKPQGR).

Belongs to the eukaryotic ribosomal protein eS30 family. As to quaternary structure, component of the small ribosomal subunit. Mature ribosomes consist of a small (40S) and a large (60S) subunit. The 40S subunit contains about 32 different proteins and 1 molecule of RNA (18S). The 60S subunit contains 45 different proteins and 3 molecules of RNA (25S, 5.8S and 5S).

Its subcellular location is the cytoplasm. Functionally, component of the ribosome, a large ribonucleoprotein complex responsible for the synthesis of proteins in the cell. The small ribosomal subunit (SSU) binds messenger RNAs (mRNAs) and translates the encoded message by selecting cognate aminoacyl-transfer RNA (tRNA) molecules. The large subunit (LSU) contains the ribosomal catalytic site termed the peptidyl transferase center (PTC), which catalyzes the formation of peptide bonds, thereby polymerizing the amino acids delivered by tRNAs into a polypeptide chain. The nascent polypeptides leave the ribosome through a tunnel in the LSU and interact with protein factors that function in enzymatic processing, targeting, and the membrane insertion of nascent chains at the exit of the ribosomal tunnel. This chain is Small ribosomal subunit protein eS30 (RPS30), found in Candida albicans (strain SC5314 / ATCC MYA-2876) (Yeast).